Consider the following 428-residue polypeptide: Enolase 1 (428 aa).

Positions 38–58 (EVPSGASTGENEAVELRDGGS) are disordered. Q163 serves as a coordination point for (2R)-2-phosphoglycerate. E205 functions as the Proton donor in the catalytic mechanism. Residues D242, E286, and D313 each contribute to the Mg(2+) site. Positions 338, 367, 368, and 389 each coordinate (2R)-2-phosphoglycerate. K338 (proton acceptor) is an active-site residue.

It belongs to the enolase family. Requires Mg(2+) as cofactor.

The protein localises to the cytoplasm. It localises to the secreted. The protein resides in the cell surface. It catalyses the reaction (2R)-2-phosphoglycerate = phosphoenolpyruvate + H2O. Its pathway is carbohydrate degradation; glycolysis; pyruvate from D-glyceraldehyde 3-phosphate: step 4/5. Functionally, catalyzes the reversible conversion of 2-phosphoglycerate (2-PG) into phosphoenolpyruvate (PEP). It is essential for the degradation of carbohydrates via glycolysis. The chain is Enolase 1 from Lactobacillus gasseri (strain ATCC 33323 / DSM 20243 / BCRC 14619 / CIP 102991 / JCM 1131 / KCTC 3163 / NCIMB 11718 / NCTC 13722 / AM63).